A 429-amino-acid polypeptide reads, in one-letter code: Ribosomal RNA small subunit methyltransferase B (429 aa).

S-adenosyl-L-methionine-binding positions include 254 to 260, Asp277, Asp303, and Asp322; that span reads CAAPGGK. Cys375 serves as the catalytic Nucleophile.

The protein belongs to the class I-like SAM-binding methyltransferase superfamily. RsmB/NOP family.

The protein localises to the cytoplasm. It catalyses the reaction cytidine(967) in 16S rRNA + S-adenosyl-L-methionine = 5-methylcytidine(967) in 16S rRNA + S-adenosyl-L-homocysteine + H(+). Functionally, specifically methylates the cytosine at position 967 (m5C967) of 16S rRNA. This Yersinia pseudotuberculosis serotype O:1b (strain IP 31758) protein is Ribosomal RNA small subunit methyltransferase B.